Here is a 514-residue protein sequence, read N- to C-terminus: 2,3-bisphosphoglycerate-independent phosphoglycerate mutase (514 aa).

Residues aspartate 13 and serine 69 each coordinate Mn(2+). The active-site Phosphoserine intermediate is the serine 69. Residues histidine 128, 158-159 (RD), arginine 189, arginine 195, 263-266 (RADR), and lysine 336 contribute to the substrate site. Positions 402, 406, 443, 444, and 461 each coordinate Mn(2+).

The protein belongs to the BPG-independent phosphoglycerate mutase family. Monomer. The cofactor is Mn(2+).

The catalysed reaction is (2R)-2-phosphoglycerate = (2R)-3-phosphoglycerate. The protein operates within carbohydrate degradation; glycolysis; pyruvate from D-glyceraldehyde 3-phosphate: step 3/5. Its function is as follows. Catalyzes the interconversion of 2-phosphoglycerate and 3-phosphoglycerate. The protein is 2,3-bisphosphoglycerate-independent phosphoglycerate mutase of Akkermansia muciniphila (strain ATCC BAA-835 / DSM 22959 / JCM 33894 / BCRC 81048 / CCUG 64013 / CIP 107961 / Muc).